The sequence spans 460 residues: Pyruvate dehydrogenase E1 component subunit beta (460 aa).

The 77-residue stretch at 2–78 (PVEILMPALS…KVNTPIAVLL (77 aa)) folds into the Lipoyl-binding domain. An N6-lipoyllysine modification is found at Lys43. Residues 91-131 (KTEAPKAETPKPAAAEAPAASAAPVAAQPKADVPSDPAIPA) are disordered. Residues 100-121 (PKPAAAEAPAASAAPVAAQPKA) show a composition bias toward low complexity. A thiamine diphosphate-binding site is contributed by Glu194.

As to quaternary structure, heterodimer of an alpha and a beta chain. It depends on (R)-lipoate as a cofactor. Requires thiamine diphosphate as cofactor.

The catalysed reaction is N(6)-[(R)-lipoyl]-L-lysyl-[protein] + pyruvate + H(+) = N(6)-[(R)-S(8)-acetyldihydrolipoyl]-L-lysyl-[protein] + CO2. Its function is as follows. The pyruvate dehydrogenase complex catalyzes the overall conversion of pyruvate to acetyl-CoA and CO(2). It contains multiple copies of three enzymatic components: pyruvate dehydrogenase (E1), dihydrolipoamide acetyltransferase (E2) and lipoamide dehydrogenase (E3). The sequence is that of Pyruvate dehydrogenase E1 component subunit beta (pdhB) from Rhizobium meliloti (strain 1021) (Ensifer meliloti).